Consider the following 392-residue polypeptide: Mycofactocin maturase MftC (392 aa).

In terms of domain architecture, Radical SAM core spans 18–228 (LDAPICLTWE…YDWLVAKGDR (211 aa)). Positions 32, 36, 39, 253, 260, 271, 312, 315, 321, 325, and 343 each coordinate [4Fe-4S] cluster. The span at 354-367 (KERVKPKPSGDHSR) shows a compositional bias: basic and acidic residues. A disordered region spans residues 354–377 (KERVKPKPSGDHSRGTKQGPVALK).

Belongs to the radical SAM superfamily. MftC family. It depends on [4Fe-4S] cluster as a cofactor.

It carries out the reaction [mycofactocin precursor peptide]-C-terminal glycyl-L-valyl-L-tyrosine + S-adenosyl-L-methionine = [mycofactocin precursor peptide]-C-terminal glycyl-N-{[2-(4-hydroxyphenyl)ethenyl]-3-methylbutanamide} + 5'-deoxyadenosine + L-methionine + CO2. It catalyses the reaction [mycofactocin precursor peptide]-C-terminal glycyl-N-{[2-(4-hydroxyphenyl)ethenyl]-3-methylbutanamide} + AH2 + S-adenosyl-L-methionine = [mycofactocin precursor peptide]-C-terminal glycyl-N-{5-[(4-hydroxyphenyl)methyl]-4,4-dimethyl-2-oxopyrrolidin-3-yl}acetamide + 5'-deoxyadenosine + L-methionine + A + H(+). In terms of biological role, radical S-adenosylmethionine (SAM) enzyme responsible for the first step of the biosynthesis of the enzyme cofactor mycofactocin (MFT). Catalyzes two reactions at the C-terminus of the mycofactocin precursor (the MftA peptide). The first one is the oxidative decarboxylation of the C-terminal L-tyrosine of MftA, forming an unsaturated tyramine moiety. The second reaction is the cross-linking of the tyramine with the penultimate L-valine residue, forming a five-membered lactam ring. Its activity requires the presence of the MftB chaperone. Is required for the in vivo ethanol assimilation in M.smegmatis. The sequence is that of Mycofactocin maturase MftC from Mycolicibacterium smegmatis (strain ATCC 700084 / mc(2)155) (Mycobacterium smegmatis).